The following is a 247-amino-acid chain: Carboxy-S-adenosyl-L-methionine synthase (247 aa).

Residues Y40, 65 to 67 (GSS), 90 to 91 (DN), 122 to 123 (DI), N137, and R204 contribute to the S-adenosyl-L-methionine site.

This sequence belongs to the class I-like SAM-binding methyltransferase superfamily. Cx-SAM synthase family. As to quaternary structure, homodimer.

The enzyme catalyses prephenate + S-adenosyl-L-methionine = carboxy-S-adenosyl-L-methionine + 3-phenylpyruvate + H2O. In terms of biological role, catalyzes the conversion of S-adenosyl-L-methionine (SAM) to carboxy-S-adenosyl-L-methionine (Cx-SAM). The protein is Carboxy-S-adenosyl-L-methionine synthase of Pseudomonas savastanoi pv. phaseolicola (strain 1448A / Race 6) (Pseudomonas syringae pv. phaseolicola (strain 1448A / Race 6)).